Consider the following 300-residue polypeptide: Mitochondrial tricarboxylate transporter 1 (300 aa).

Solcar repeat units follow at residues 8–98 (VSPS…FRSM), 107–197 (LSNS…LRDW), and 209–294 (INWL…VVWL). Helical transmembrane passes span 11–31 (SVSV…TFPI), 67–87 (PKGL…KAGV), 114–134 (LAGM…SETI), 172–191 (GVVP…LGTY), 208–228 (LINW…AVYG), and 277–297 (LIVS…LLAG).

This sequence belongs to the mitochondrial carrier (TC 2.A.29) family.

It localises to the mitochondrion membrane. Its function is as follows. Mitochondrial tricarboxylate transporter; part of the gene cluster that mediates the biosynthesis of itaconic acid and 2-hydroxyparaconate. Cis-aconitate is secreted by the mitochondrial tricarboxylate transporter MTT1. In the cytosol cis-aconitate is converted into trans-aconitate via isomerization by the aconitate-delta-isomerase ADI1. Decarboxylation of trans-aconitate by the trans-aconitate decarboxylase TAD1 then leads then to the production of itaconic acid. The cytochrome P450 monooxygenase CYP3 further converts itaconate to 2-hydroxyparaconate via oxidation of the double bond, leading to a transient epoxide, which can subsequently be lactonized to produce 2-hydroxyparaconate. Secretion of itaconate and possibly 2-hydroxyparaconate into the medium is mediated by the major facilitator ITP1. The glyoxalase domain-containing protein RDO1 is not involved in the biosynthesis of itaconate and 2-hydroxyparaconate, however, it might play a role in the further conversion of 2-hydroxyparaconate to itatartarate. In Mycosarcoma maydis (Corn smut fungus), this protein is Mitochondrial tricarboxylate transporter 1.